The sequence spans 115 residues: T cell receptor beta variable 2 (115 aa).

Positions 1–19 (MDTWLVCWAIFSLLKAGLT) are cleaved as a signal peptide. The Ig-like domain maps to 21–115 (PEVTQTPSHQ…SAMYFCASSE (95 aa)). Cys-42 and Cys-111 are disulfide-bonded. An N-linked (GlcNAc...) asparagine glycan is attached at Asn-93.

Alpha-beta TR is a heterodimer composed of an alpha and beta chain; disulfide-linked. The alpha-beta TR is associated with the transmembrane signaling CD3 coreceptor proteins to form the TR-CD3 (TcR or TCR). The assembly of alpha-beta TR heterodimers with CD3 occurs in the endoplasmic reticulum where a single alpha-beta TR heterodimer associates with one CD3D-CD3E heterodimer, one CD3G-CD3E heterodimer and one CD247 homodimer forming a stable octameric structure. CD3D-CD3E and CD3G-CD3E heterodimers preferentially associate with TR alpha and TR beta chains, respectively. The association of the CD247 homodimer is the last step of TcR assembly in the endoplasmic reticulum and is required for transport to the cell surface.

Its subcellular location is the cell membrane. Functionally, v region of the variable domain of T cell receptor (TR) beta chain that participates in the antigen recognition. Alpha-beta T cell receptors are antigen specific receptors which are essential to the immune response and are present on the cell surface of T lymphocytes. Recognize peptide-major histocompatibility (MH) (pMH) complexes that are displayed by antigen presenting cells (APC), a prerequisite for efficient T cell adaptive immunity against pathogens. Binding of alpha-beta TR to pMH complex initiates TR-CD3 clustering on the cell surface and intracellular activation of LCK that phosphorylates the ITAM motifs of CD3G, CD3D, CD3E and CD247 enabling the recruitment of ZAP70. In turn ZAP70 phosphorylates LAT, which recruits numerous signaling molecules to form the LAT signalosome. The LAT signalosome propagates signal branching to three major signaling pathways, the calcium, the mitogen-activated protein kinase (MAPK) kinase and the nuclear factor NF-kappa-B (NF-kB) pathways, leading to the mobilization of transcription factors that are critical for gene expression and essential for T cell growth and differentiation. The T cell repertoire is generated in the thymus, by V-(D)-J rearrangement. This repertoire is then shaped by intrathymic selection events to generate a peripheral T cell pool of self-MH restricted, non-autoaggressive T cells. Post-thymic interaction of alpha-beta TR with the pMH complexes shapes TR structural and functional avidity. This is T cell receptor beta variable 2 from Homo sapiens (Human).